The sequence spans 166 residues: Protein TIFY 11e (166 aa).

Residues 65–100 (ASSAAAQMTIFYGGRVLVLDECPADRAAALLRLAAS) enclose the Tify domain. The Jas motif lies at 123-148 (PVARKASLQRFMEKRKGRLAARGQPY). The short motif at 125–132 (ARKASLQR) is the Nuclear localization signal element.

It belongs to the TIFY/JAZ family. In terms of processing, ubiquitinated. Targeted for degradation by the SCF(COI1) E3 ubiquitin ligase-proteasome pathway during jasmonate signaling.

The protein localises to the nucleus. In terms of biological role, repressor of jasmonate responses. The chain is Protein TIFY 11e from Oryza sativa subsp. japonica (Rice).